The sequence spans 147 residues: uncharacterized protein (147 aa).

The 104-residue stretch at 44–147 (LVGYIDKEIH…LKSIKERLSI (104 aa)) folds into the HTH LytTR-type domain.

The protein localises to the cytoplasm. This is an uncharacterized protein from Staphylococcus aureus (strain Mu50 / ATCC 700699).